A 184-amino-acid chain; its full sequence is Probable RNA 2'-phosphotransferase (184 aa).

It belongs to the KptA/TPT1 family.

Removes the 2'-phosphate from RNA via an intermediate in which the phosphate is ADP-ribosylated by NAD followed by a presumed transesterification to release the RNA and generate ADP-ribose 1''-2''-cyclic phosphate (APPR&gt;P). May function as an ADP-ribosylase. This chain is Probable RNA 2'-phosphotransferase, found in Rhizobium johnstonii (strain DSM 114642 / LMG 32736 / 3841) (Rhizobium leguminosarum bv. viciae).